We begin with the raw amino-acid sequence, 141 residues long: Heavy metal-associated isoprenylated plant protein 29 (141 aa).

Residues M1–I59 form the HMA domain. Residues C7 and C10 each contribute to the a metal cation site. Position 138 is a cysteine methyl ester (C138). C138 carries the S-farnesyl cysteine lipid modification. A propeptide spans S139–M141 (removed in mature form).

It belongs to the HIPP family.

Functionally, heavy-metal-binding protein. This is Heavy metal-associated isoprenylated plant protein 29 from Arabidopsis thaliana (Mouse-ear cress).